Consider the following 79-residue polypeptide: MSDFWHKLGCCVVEKPQPKKKRKRIDRSMIGEPMNFVHLTHVGSGDMGAGDGLPMAGTVQQQMRSKCGRDRQWSNSRVL.

S-palmitoyl cysteine attachment occurs at residues Cys-10 and Cys-11. The CRIB domain maps to 30 to 43 (IGEPMNFVHLTHVG).

The protein belongs to the CDC42SE/SPEC family.

The protein resides in the cytoplasm. The protein localises to the cytoskeleton. It localises to the cell membrane. Functionally, probably involved in the organization of the actin cytoskeleton by acting downstream of CDC42, inducing actin filament assembly. In Xenopus laevis (African clawed frog), this protein is CDC42 small effector protein 1-A (cdc42se1-a).